The following is a 34-amino-acid chain: Brevinin-2GHa (34 aa).

Cys27 and Cys33 are oxidised to a cystine.

In terms of tissue distribution, expressed by the skin glands.

The protein resides in the secreted. In terms of biological role, antimicrobial peptide. Active against the Gram-positive bacteria S.aureus FDA209P (MIC=14.9 ug/ml) and B.subtilis ATCC 6633 (MIC&gt;64 ug/ml), but not active against the Gram-negative bacterium E.coli or the fungus C.albicans. The protein is Brevinin-2GHa of Sylvirana guentheri (Gunther's frog).